Reading from the N-terminus, the 96-residue chain is Small ribosomal subunit protein bS20 (96 aa).

Belongs to the bacterial ribosomal protein bS20 family.

Binds directly to 16S ribosomal RNA. This is Small ribosomal subunit protein bS20 from Anaplasma phagocytophilum (strain HZ).